The chain runs to 123 residues: Large ribosomal subunit protein bL12 (123 aa).

Belongs to the bacterial ribosomal protein bL12 family. Homodimer. Part of the ribosomal stalk of the 50S ribosomal subunit. Forms a multimeric L10(L12)X complex, where L10 forms an elongated spine to which 2 to 4 L12 dimers bind in a sequential fashion. Binds GTP-bound translation factors.

Functionally, forms part of the ribosomal stalk which helps the ribosome interact with GTP-bound translation factors. Is thus essential for accurate translation. This is Large ribosomal subunit protein bL12 from Roseobacter denitrificans (strain ATCC 33942 / OCh 114) (Erythrobacter sp. (strain OCh 114)).